Consider the following 481-residue polypeptide: Glutamate--tRNA ligase (481 aa).

A 'HIGH' region motif is present at residues 11-21 (PSPTGLLHIGN). The 'KMSKS' region motif lies at 255–259 (KLSKR). ATP is bound at residue Lys258.

Belongs to the class-I aminoacyl-tRNA synthetase family. Glutamate--tRNA ligase type 1 subfamily. Monomer.

It is found in the cytoplasm. The catalysed reaction is tRNA(Glu) + L-glutamate + ATP = L-glutamyl-tRNA(Glu) + AMP + diphosphate. Functionally, catalyzes the attachment of glutamate to tRNA(Glu) in a two-step reaction: glutamate is first activated by ATP to form Glu-AMP and then transferred to the acceptor end of tRNA(Glu). The polypeptide is Glutamate--tRNA ligase (Streptococcus pyogenes serotype M3 (strain ATCC BAA-595 / MGAS315)).